Here is a 142-residue protein sequence, read N- to C-terminus: Large ribosomal subunit protein uL13 (142 aa).

Belongs to the universal ribosomal protein uL13 family. Part of the 50S ribosomal subunit.

Its function is as follows. This protein is one of the early assembly proteins of the 50S ribosomal subunit, although it is not seen to bind rRNA by itself. It is important during the early stages of 50S assembly. The chain is Large ribosomal subunit protein uL13 from Syntrophobacter fumaroxidans (strain DSM 10017 / MPOB).